The primary structure comprises 416 residues: Argininosuccinate synthase (416 aa).

ATP is bound by residues 11 to 19 (AYSGGLDTS) and alanine 37. Tyrosine 88 is an L-citrulline binding site. Phosphotyrosine occurs at positions 88 and 114. 116 to 124 (AHGATGKGN) lines the ATP pocket. 3 residues coordinate L-aspartate: threonine 120, asparagine 124, and aspartate 125. Asparagine 124 lines the L-citrulline pocket. The L-citrulline site is built by arginine 128, serine 181, serine 190, glutamate 271, and tyrosine 283. Serine 181 carries the post-translational modification Phosphoserine.

It belongs to the argininosuccinate synthase family. In terms of assembly, homotetramer.

It is found in the cytoplasm. The protein resides in the cytosol. It carries out the reaction L-citrulline + L-aspartate + ATP = 2-(N(omega)-L-arginino)succinate + AMP + diphosphate + H(+). The protein operates within amino-acid biosynthesis; L-arginine biosynthesis; L-arginine from L-ornithine and carbamoyl phosphate: step 2/3. Its pathway is nitrogen metabolism; urea cycle; (N(omega)-L-arginino)succinate from L-aspartate and L-citrulline: step 1/1. Functionally, one of the enzymes of the urea cycle, the metabolic pathway transforming neurotoxic amonia produced by protein catabolism into inocuous urea in the liver of ureotelic animals. Catalyzes the formation of arginosuccinate from aspartate, citrulline and ATP and together with ASL it is responsible for the biosynthesis of arginine in most body tissues. The polypeptide is Argininosuccinate synthase (Gallus gallus (Chicken)).